The chain runs to 204 residues: UPF0134 protein MPN_655 (204 aa).

The disordered stretch occupies residues 46 to 132 (EVENKPKIPI…FNEFKDSNNQ (87 aa)). Pro residues predominate over residues 64–80 (SPKPLKPPKPPKPPKGP). The segment covering 117 to 132 (YVTRKEFNEFKDSNNQ) has biased composition (basic and acidic residues).

Belongs to the UPF0134 family.

This Mycoplasma pneumoniae (strain ATCC 29342 / M129 / Subtype 1) (Mycoplasmoides pneumoniae) protein is UPF0134 protein MPN_655.